Here is a 377-residue protein sequence, read N- to C-terminus: UPF0754 membrane protein LMOf2365_2257 (377 aa).

The next 2 helical transmembrane spans lie at 1–21 (MSVL…GAMT) and 357–377 (YLGG…AMWI).

Belongs to the UPF0754 family.

The protein localises to the cell membrane. The protein is UPF0754 membrane protein LMOf2365_2257 of Listeria monocytogenes serotype 4b (strain F2365).